Here is a 206-residue protein sequence, read N- to C-terminus: Octanoyltransferase (206 aa).

A BPL/LPL catalytic domain is found at 30-206 (PETNDEIWLV…EFVTLLNNSI (177 aa)). Substrate contacts are provided by residues 69–76 (RGGQVTYH), 137–139 (SLG), and 150–152 (GIA). Cys-168 serves as the catalytic Acyl-thioester intermediate.

Belongs to the LipB family.

It is found in the cytoplasm. The enzyme catalyses octanoyl-[ACP] + L-lysyl-[protein] = N(6)-octanoyl-L-lysyl-[protein] + holo-[ACP] + H(+). It functions in the pathway protein modification; protein lipoylation via endogenous pathway; protein N(6)-(lipoyl)lysine from octanoyl-[acyl-carrier-protein]: step 1/2. Catalyzes the transfer of endogenously produced octanoic acid from octanoyl-acyl-carrier-protein onto the lipoyl domains of lipoate-dependent enzymes. Lipoyl-ACP can also act as a substrate although octanoyl-ACP is likely to be the physiological substrate. The sequence is that of Octanoyltransferase from Francisella tularensis subsp. novicida (strain U112).